The chain runs to 117 residues: MEVGDKIHNTNEQITALEKKKYQIETTLLEKQRDLLKLETQQNKAKLELLFELSEVLTQLEGEEWVSATIALRIIKRNKRKYLDLFDLNDDKAYVNKDKFKFLHDEFFELKQQLNDI.

Positions 5–50 form a coiled coil; that stretch reads DKIHNTNEQITALEKKKYQIETTLLEKQRDLLKLETQQNKAKLELL.

This is an uncharacterized protein from Bacillus pumilus (Bacillus mesentericus).